We begin with the raw amino-acid sequence, 67 residues long: Large ribosomal subunit protein bL35 (67 aa).

This sequence belongs to the bacterial ribosomal protein bL35 family.

This is Large ribosomal subunit protein bL35 from Gloeothece citriformis (strain PCC 7424) (Cyanothece sp. (strain PCC 7424)).